The following is a 226-amino-acid chain: Large ribosomal subunit protein uL1 (226 aa).

This sequence belongs to the universal ribosomal protein uL1 family. Part of the 50S ribosomal subunit.

Binds directly to 23S rRNA. The L1 stalk is quite mobile in the ribosome, and is involved in E site tRNA release. Its function is as follows. Protein L1 is also a translational repressor protein, it controls the translation of the L11 operon by binding to its mRNA. The chain is Large ribosomal subunit protein uL1 from Mycoplasma mycoides subsp. mycoides SC (strain CCUG 32753 / NCTC 10114 / PG1).